The primary structure comprises 380 residues: Cell division protein FtsZ 2 (380 aa).

Residues Gly47–Asn51, Gly134–Gly136, Glu165, Arg168, and Asp211 each bind GTP.

This sequence belongs to the FtsZ family. Homodimer. Polymerizes to form a dynamic ring structure in a strictly GTP-dependent manner. Interacts directly with several other division proteins.

It localises to the cytoplasm. In terms of biological role, essential cell division protein that forms a contractile ring structure (Z ring) at the future cell division site. The regulation of the ring assembly controls the timing and the location of cell division. One of the functions of the FtsZ ring is to recruit other cell division proteins to the septum to produce a new cell wall between the dividing cells. Binds GTP and shows GTPase activity. The sequence is that of Cell division protein FtsZ 2 from Methanocaldococcus jannaschii (strain ATCC 43067 / DSM 2661 / JAL-1 / JCM 10045 / NBRC 100440) (Methanococcus jannaschii).